The chain runs to 1005 residues: Probable histidine kinase 4 (1005 aa).

Residues 1 to 37 are Cytoplasmic-facing; it reads MGVGGGGGGGGGEAAAAVAVEGDEAGKGRRWWRVKVK. Residues 38–58 form a helical membrane-spanning segment; the sequence is LSTVAVVAWVLASAALWAGLH. The Extracellular portion of the chain corresponds to 59 to 333; sequence WRFRRAALHK…YRNKLHVSWS (275 aa). The CHASE domain occupies 110 to 321; the sequence is HPPALDQDTF…GDPLRKHQMV (212 aa). Residues 334-354 form a helical membrane-spanning segment; it reads AITTPSGVFVICMLVGYIIYA. Residues 355-1005 lie on the Cytoplasmic side of the membrane; that stretch reads AWSRYDNVKE…QKFLGPCVSS (651 aa). The region spanning 389-675 is the Histidine kinase domain; sequence TVSHEIRTPM…TFTFTAVLRR (287 aa). Position 392 is a phosphohistidine; by autocatalysis (histidine 392). Response regulatory domains lie at 700–829 and 862–999; these read SALL…FQAL and NILV…QKFL. Aspartate 912 bears the 4-aspartylphosphate mark.

Activation probably requires a transfer of a phosphate group between a His in the transmitter domain and an Asp of the receiver domain. In terms of tissue distribution, highly expressed in young leaves and spikelets, and at lower levels in roots, mature leaves and stems.

It is found in the cell membrane. The catalysed reaction is ATP + protein L-histidine = ADP + protein N-phospho-L-histidine.. Cytokinin receptor related to bacterial two-component regulators. Functions as a histidine kinase and transmits the stress signal to a downstream MAPK cascade. This is Probable histidine kinase 4 from Oryza sativa subsp. japonica (Rice).